The chain runs to 167 residues: uncharacterized protein (167 aa).

The protein localises to the mitochondrion. This is an uncharacterized protein from Marchantia polymorpha (Common liverwort).